The following is a 116-amino-acid chain: Ribosome-binding factor A (116 aa).

It belongs to the RbfA family. Monomer. Binds 30S ribosomal subunits, but not 50S ribosomal subunits or 70S ribosomes.

It is found in the cytoplasm. One of several proteins that assist in the late maturation steps of the functional core of the 30S ribosomal subunit. Associates with free 30S ribosomal subunits (but not with 30S subunits that are part of 70S ribosomes or polysomes). Required for efficient processing of 16S rRNA. May interact with the 5'-terminal helix region of 16S rRNA. In Streptococcus uberis (strain ATCC BAA-854 / 0140J), this protein is Ribosome-binding factor A.